The following is a 360-amino-acid chain: Photosystem II protein D1 (360 aa).

3 helical membrane-spanning segments follow: residues 29–46 (YVGW…TATT), 118–133 (QFLI…QWEL), and 142–156 (WICV…ARTA). Tyr126 contributes to the pheophytin a binding site. [CaMn4O5] cluster contacts are provided by Asp170 and Glu189. The helical transmembrane segment at 197–218 (FHMLGVAGVFGGSLFSAMHGSL) threads the bilayer. Residue His198 participates in chlorophyll a binding. A quinone contacts are provided by residues His215 and 264–265 (SF). Position 215 (His215) interacts with Fe cation. Fe cation is bound at residue His272. Residues 274 to 288 (FLGAWPVIGIWFTAM) form a helical membrane-spanning segment. The [CaMn4O5] cluster site is built by His332, Glu333, Asp342, and Ala344. Residues 345–360 (SGEQAPVALTAPAING) constitute a propeptide that is removed on maturation.

This sequence belongs to the reaction center PufL/M/PsbA/D family. PSII is composed of 1 copy each of membrane proteins PsbA, PsbB, PsbC, PsbD, PsbE, PsbF, PsbH, PsbI, PsbJ, PsbK, PsbL, PsbM, PsbT, PsbX, PsbY, PsbZ, Psb30/Ycf12, peripheral proteins PsbO, CyanoQ (PsbQ), PsbU, PsbV and a large number of cofactors. It forms dimeric complexes. It depends on The D1/D2 heterodimer binds P680, chlorophylls that are the primary electron donor of PSII, and subsequent electron acceptors. It shares a non-heme iron and each subunit binds pheophytin, quinone, additional chlorophylls, carotenoids and lipids. D1 provides most of the ligands for the Mn4-Ca-O5 cluster of the oxygen-evolving complex (OEC). There is also a Cl(-1) ion associated with D1 and D2, which is required for oxygen evolution. The PSII complex binds additional chlorophylls, carotenoids and specific lipids. as a cofactor. Post-translationally, tyr-161 forms a radical intermediate that is referred to as redox-active TyrZ, YZ or Y-Z. In terms of processing, C-terminally processed by CtpA; processing is essential to allow assembly of the oxygen-evolving complex and thus photosynthetic growth.

It is found in the cellular thylakoid membrane. The catalysed reaction is 2 a plastoquinone + 4 hnu + 2 H2O = 2 a plastoquinol + O2. Functionally, photosystem II (PSII) is a light-driven water:plastoquinone oxidoreductase that uses light energy to abstract electrons from H(2)O, generating O(2) and a proton gradient subsequently used for ATP formation. It consists of a core antenna complex that captures photons, and an electron transfer chain that converts photonic excitation into a charge separation. The D1/D2 (PsbA/PsbD) reaction center heterodimer binds P680, the primary electron donor of PSII as well as several subsequent electron acceptors. The polypeptide is Photosystem II protein D1 (Synechocystis sp. (strain PCC 6714) (Aphanocapsa sp. (strain PCC 6714))).